The primary structure comprises 297 residues: Formamidopyrimidine-DNA glycosylase (297 aa).

The active-site Schiff-base intermediate with DNA is the proline 2. The active-site Proton donor is glutamate 3. The active-site Proton donor; for beta-elimination activity is lysine 58. DNA-binding residues include histidine 106, arginine 125, and arginine 168. The segment at 259 to 295 adopts an FPG-type zinc-finger fold; that stretch reads RVYDREGLACTARGCRGVVRRVVQSGRSTFFCEVCQP. Arginine 285 functions as the Proton donor; for delta-elimination activity in the catalytic mechanism.

The protein belongs to the FPG family. As to quaternary structure, monomer. Requires Zn(2+) as cofactor.

It catalyses the reaction Hydrolysis of DNA containing ring-opened 7-methylguanine residues, releasing 2,6-diamino-4-hydroxy-5-(N-methyl)formamidopyrimidine.. The catalysed reaction is 2'-deoxyribonucleotide-(2'-deoxyribose 5'-phosphate)-2'-deoxyribonucleotide-DNA = a 3'-end 2'-deoxyribonucleotide-(2,3-dehydro-2,3-deoxyribose 5'-phosphate)-DNA + a 5'-end 5'-phospho-2'-deoxyribonucleoside-DNA + H(+). In terms of biological role, involved in base excision repair of DNA damaged by oxidation or by mutagenic agents. Acts as a DNA glycosylase that recognizes and removes damaged bases. Has a preference for oxidized purines, such as 7,8-dihydro-8-oxoguanine (8-oxoG). Has AP (apurinic/apyrimidinic) lyase activity and introduces nicks in the DNA strand. Cleaves the DNA backbone by beta-delta elimination to generate a single-strand break at the site of the removed base with both 3'- and 5'-phosphates. This is Formamidopyrimidine-DNA glycosylase from Methylobacterium nodulans (strain LMG 21967 / CNCM I-2342 / ORS 2060).